Reading from the N-terminus, the 800-residue chain is Putative antiporter subunit mnhA2 (800 aa).

20 consecutive transmembrane segments (helical) span residues 1–21 (MSLV…LLTS), 33–53 (IALT…PSVI), 78–98 (GLSL…FFYA), 118–138 (LFMF…MYVF), 167–187 (FMIT…LYIM), 207–227 (ALFI…SAQF), 241–261 (TPVS…FLLL), 273–293 (YIYI…ITAL), 300–320 (GILA…VGIG), 331–351 (IASI…NHAI), 387–407 (LVMM…GFLS), 424–444 (FSLI…IFTF), 472–492 (PWLF…IFFV), 527–547 (GFNI…VLAI), 595–615 (IIMT…RIGL), 627–647 (GPLE…LIFI), 651–671 (LTMV…FIAM), 676–696 (LALT…VSFS), 712–732 (IIKI…IFIA), and 768–788 (LDTL…YTLL).

It belongs to the CPA3 antiporters (TC 2.A.63) subunit A family. May form a heterooligomeric complex that consists of seven subunits: mnhA2, mnhB2, mnhC2, mnhD2, mnhE2, mnhF2 and mnhG2.

It is found in the cell membrane. The sequence is that of Putative antiporter subunit mnhA2 (mnhA2) from Staphylococcus aureus (strain MRSA252).